The sequence spans 246 residues: Cold-regulated protein 27 (246 aa).

2 disordered regions span residues 1-39 (MVGD…MYSA) and 151-232 (EPEN…VVPL). Residues 168-180 (SSGSASSLKQLSS) are compositionally biased toward low complexity.

The protein resides in the nucleus. Its function is as follows. Together with COR28, involved in central circadian clock regulation and in flowering promotion, by binding to the chromatin of clock-associated evening genes TOC1, PRR5, ELF4 and cold-responsive genes in order to repress their transcription. Negative regulator of freezing tolerance. In Arabidopsis thaliana (Mouse-ear cress), this protein is Cold-regulated protein 27.